Reading from the N-terminus, the 204-residue chain is MDPKDRKKIQFSVPAPPSQLDPRQVEMIRRRRPTPAMLFRLSEHSSPEEEASPHQRASGEGHHLKSKRPNPCAYTPPSLKAVQRIAESHLQSISNLNENQASEEEDELGELRELGYPREEDEEEEEDDEEEEEEEDSQAEVLKVIRQSAGQKTTCGQGLEGPWERPPPLDESERDGGSEDQVEDPALSEPGEEPQRPSPSEPGT.

Met1 bears the N-acetylmethionine mark. Residues 1–204 (MDPKDRKKIQ…QRPSPSEPGT (204 aa)) are disordered. Phosphothreonine; by PKA is present on Thr34. The span at 41–63 (LSEHSSPEEEASPHQRASGEGHH) shows a compositional bias: basic and acidic residues. Phosphoserine occurs at positions 45 and 46. Phosphothreonine; by CDK5 is present on Thr75. The span at 89–100 (HLQSISNLNENQ) shows a compositional bias: polar residues. Position 102 is a phosphoserine (Ser102). Positions 109–118 (GELRELGYPR) are enriched in basic and acidic residues. 2 stretches are compositionally biased toward acidic residues: residues 119-138 (EEDE…EDSQ) and 170-183 (DESE…DQVE). Residue Ser137 is modified to Phosphoserine. Ser198 is subject to Phosphoserine.

The protein belongs to the protein phosphatase inhibitor 1 family. In terms of processing, dopamine- and cyclic AMP-regulated neuronal phosphoprotein. Post-translationally, phosphorylation of Thr-34 is required for activity.

It is found in the cytoplasm. Its function is as follows. Inhibitor of protein-phosphatase 1. This is Protein phosphatase 1 regulatory subunit 1B (PPP1R1B) from Homo sapiens (Human).